The primary structure comprises 197 residues: C4-dicarboxylate transport transcriptional regulatory protein DctR (197 aa).

Positions 4–120 (TVHIVDDEES…HIVDIALSAI (117 aa)) constitute a Response regulatory domain. 4-aspartylphosphate is present on D53. Positions 128 to 135 (AEAQAREA) are inter-domain linker. An HTH luxR-type domain is found at 136-197 (VAARRASLSA…RNIADLARMT (62 aa)). A DNA-binding region (H-T-H motif) is located at residues 160–179 (NKQIAERLGIAMRTVEVHRS).

Post-translationally, phosphorylated by DctS.

It localises to the cytoplasm. In terms of biological role, member of the two-component regulatory system DctS/DctR involved in the transport of C4-dicarboxylates. DctR functions as a transcriptional repressor of genes for C4-dicarboxylate transport. This chain is C4-dicarboxylate transport transcriptional regulatory protein DctR (dctR), found in Rhodobacter capsulatus (Rhodopseudomonas capsulata).